The chain runs to 362 residues: Peptide chain release factor 1 (362 aa).

Position 240 is an N5-methylglutamine (Gln-240).

This sequence belongs to the prokaryotic/mitochondrial release factor family. In terms of processing, methylated by PrmC. Methylation increases the termination efficiency of RF1.

It is found in the cytoplasm. Functionally, peptide chain release factor 1 directs the termination of translation in response to the peptide chain termination codons UAG and UAA. This chain is Peptide chain release factor 1, found in Bifidobacterium adolescentis (strain ATCC 15703 / DSM 20083 / NCTC 11814 / E194a).